A 520-amino-acid chain; its full sequence is Ribonuclease Y (520 aa).

The helical transmembrane segment at 5 to 25 (ITIISSLLFLIVGLVVGSLIF) threads the bilayer. Residues 76–127 (ELRGRRTETQKAENRLLQREENLDRKDTSLSKREATLERKEESISKRQQQIE) form a disordered region. A KH domain is found at 210-273 (TVSVVTLPND…EIARIALEKL (64 aa)). An HD domain is found at 336–429 (VLNHSLEVSK…VAAADALSAA (94 aa)).

This sequence belongs to the RNase Y family.

It is found in the cell membrane. Endoribonuclease that initiates mRNA decay. The chain is Ribonuclease Y from Listeria monocytogenes serotype 1/2a (strain 10403S).